A 663-amino-acid chain; its full sequence is F-box protein DAS1 (663 aa).

Residues 46-91 (VFPLTKLPDELMQEVFSHLPQPDRLQLCLVNKRLNKIATKLLYRRI) form the F-box domain.

In terms of assembly, interacts with SKP1. Component of the probable SCF(DAS1) complex containing CDC53, SKP1, RBX1 and DAS1.

The protein operates within protein modification; protein ubiquitination. In terms of biological role, substrate recognition component of a SCF (SKP1-CUL1-F-box protein) E3 ubiquitin-protein ligase complex which mediates the ubiquitination and subsequent proteasomal degradation of target proteins. Probably recognizes and binds to phosphorylated target proteins. The sequence is that of F-box protein DAS1 (DAS1) from Saccharomyces cerevisiae (strain ATCC 204508 / S288c) (Baker's yeast).